The chain runs to 128 residues: L-ectoine synthase (128 aa).

It belongs to the ectoine synthase family.

The enzyme catalyses (2S)-4-acetamido-2-aminobutanoate = L-ectoine + H2O. It participates in amine and polyamine biosynthesis; ectoine biosynthesis; L-ectoine from L-aspartate 4-semialdehyde: step 3/3. In terms of biological role, catalyzes the circularization of gamma-N-acetyl-alpha,gamma-diaminobutyric acid (ADABA) to ectoine (1,4,5,6-tetrahydro-2-methyl-4-pyrimidine carboxylic acid), which is an excellent osmoprotectant. The sequence is that of L-ectoine synthase from Aliivibrio fischeri (strain MJ11) (Vibrio fischeri).